A 139-amino-acid chain; its full sequence is Large ribosomal subunit protein uL16 (139 aa).

The protein belongs to the universal ribosomal protein uL16 family. As to quaternary structure, part of the 50S ribosomal subunit.

Its function is as follows. Binds 23S rRNA and is also seen to make contacts with the A and possibly P site tRNAs. The chain is Large ribosomal subunit protein uL16 from Prosthecochloris aestuarii (strain DSM 271 / SK 413).